The sequence spans 732 residues: Acylamino-acid-releasing enzyme (732 aa).

Met-1 carries the N-acetylmethionine modification. A Phosphoserine modification is found at Ser-187. Active-site charge relay system residues include Ser-587, Asp-675, and His-707.

This sequence belongs to the peptidase S9C family. As to quaternary structure, homotetramer. Expressed in the liver (at protein level).

The protein resides in the cytoplasm. The catalysed reaction is Cleavage of an N-acetyl or N-formyl amino acid from the N-terminus of a polypeptide.. Homotetramerization is required for activity. Tetramerization results in the formation of a gated channel which is involved in substrate selection and substrate access to the catalytic sites. This enzyme catalyzes the hydrolysis of the N-terminal peptide bond of an N-acetylated peptide to generate an N-acetylated amino acid and a peptide with a free N-terminus. It preferentially cleaves off Ac-Ala, Ac-Met and Ac-Ser. Also, involved in the degradation of oxidized and glycated proteins. In Sus scrofa (Pig), this protein is Acylamino-acid-releasing enzyme (APEH).